We begin with the raw amino-acid sequence, 179 residues long: DNA utilization protein HofN (179 aa).

A helical membrane pass occupies residues 19–39 (LRFWLLMFVAPLLLAVGITLI).

The protein resides in the cell inner membrane. Required for the use of extracellular DNA as a nutrient. The sequence is that of DNA utilization protein HofN (hofN) from Escherichia coli (strain K12).